A 168-amino-acid chain; its full sequence is RNA annealing protein YRA2 (168 aa).

The 75-residue stretch at 40-114 (FRLKITNIGL…KSIQVTLLDQ (75 aa)) folds into the RRM domain. The interval 113–152 (DQQKRKRDADQERRKLRHGPRGGYGSHYTKSQKPIEQRNK) is disordered.

It belongs to the YRA1 family. Associates with mRNPs.

Its subcellular location is the nucleus. Its function is as follows. Involved in export of poly(A) mRNAs from the nucleus. Recruited to the coding sequences as well as poly-A sites of active genes. This is RNA annealing protein YRA2 (YRA2) from Candida glabrata (strain ATCC 2001 / BCRC 20586 / JCM 3761 / NBRC 0622 / NRRL Y-65 / CBS 138) (Yeast).